The primary structure comprises 89 residues: Large ribosomal subunit protein bL27 (89 aa).

A disordered region spans residues 1-21 (MAHKKAGGSSRNGRDSESKRL).

It belongs to the bacterial ribosomal protein bL27 family.

This is Large ribosomal subunit protein bL27 from Bartonella quintana (strain Toulouse) (Rochalimaea quintana).